The chain runs to 251 residues: Cell division protein ZapD (251 aa).

Belongs to the ZapD family. As to quaternary structure, interacts with FtsZ.

Its subcellular location is the cytoplasm. Cell division factor that enhances FtsZ-ring assembly. Directly interacts with FtsZ and promotes bundling of FtsZ protofilaments, with a reduction in FtsZ GTPase activity. This chain is Cell division protein ZapD, found in Paraburkholderia phytofirmans (strain DSM 17436 / LMG 22146 / PsJN) (Burkholderia phytofirmans).